The primary structure comprises 212 residues: MTPGRFITLEGGEGVGKSTNVAFVCDWLSARGIEVVRTREPGGTPRAEAIRELLLDPAPQEPLDETAELLLMFAARAQHLAARIRPALARGAWVVCDRFTDATFAYQGGGRGLDETRIATLEALVQQGLQPDLTLLLDMPVEAAQRRVERRGIERDRFERERGAFFNAVRESYLARAAQAPTRFAVIDADRSLEAVQASIAAHLTERLASWS.

G11–S18 provides a ligand contact to ATP.

It belongs to the thymidylate kinase family.

It carries out the reaction dTMP + ATP = dTDP + ADP. Its function is as follows. Phosphorylation of dTMP to form dTDP in both de novo and salvage pathways of dTTP synthesis. The protein is Thymidylate kinase of Chromohalobacter salexigens (strain ATCC BAA-138 / DSM 3043 / CIP 106854 / NCIMB 13768 / 1H11).